The primary structure comprises 224 residues: Cytidylate kinase (224 aa).

Position 9–17 (9–17 (GPSGSGKGT)) interacts with ATP.

The protein belongs to the cytidylate kinase family. Type 1 subfamily.

The protein localises to the cytoplasm. It carries out the reaction CMP + ATP = CDP + ADP. The catalysed reaction is dCMP + ATP = dCDP + ADP. The chain is Cytidylate kinase from Saccharophagus degradans (strain 2-40 / ATCC 43961 / DSM 17024).